Here is a 760-residue protein sequence, read N- to C-terminus: Transferrin receptor protein 1 (760 aa).

Residues Met1–Cys67 are Cytoplasmic-facing. The mediates interaction with SH3BP4 stretch occupies residues Met1 to Cys67. Ser10 and Ser19 each carry phosphoserine. Tyr20 bears the Phosphotyrosine mark. An Endocytosis signal motif is present at residues Tyr20–Phe23. Residue Thr21 is modified to Phosphothreonine. Ser24 carries the post-translational modification Phosphoserine. The Stop-transfer sequence signature appears at Lys58–Arg61. 2 S-palmitoyl cysteine lipidation sites follow: Cys62 and Cys67. Residues Tyr68–Tyr88 traverse the membrane as a helical; Signal-anchor for type II membrane protein segment. The Extracellular segment spans residues Cys89 to Phe760. Residue Thr104 is glycosylated (O-linked (GalNAc...) threonine). The PA domain occupies Ser223–Phe313. 2 N-linked (GlcNAc...) asparagine glycosylation sites follow: Asn251 and Asn317. The ligand-binding stretch occupies residues Thr569–Phe760. Residues Arg646–Asp648 carry the Cell attachment site; required for binding to transferrin motif. The N-linked (GlcNAc...) asparagine glycan is linked to Asn727.

It belongs to the peptidase M28 family. M28B subfamily. As to quaternary structure, homodimer; disulfide-linked. Binds one transferrin or HFE molecule per subunit. Binds the HLA class II histocompatibility antigen, DR1. Interacts with SH3BP3. Interacts with STEAP3; facilitates TFRC endocytosis in erythroid precursor cells. Interacts with GRM2. In terms of assembly, (Microbial infection) Interacts with Guanarito, Junin and Machupo arenavirus glycoprotein complex. (Microbial infection) Interacts with rabies virus protein G. As to quaternary structure, (Microbial infection) Interacts with SARS-CoV-2 spike protein S. In terms of processing, stearoylated by ZDHHC6 which inhibits TFRC-mediated activation of the JNK pathway and promotes mitochondrial fragmentation. Stearoylation does not affect iron uptake. N- and O-glycosylated, phosphorylated and palmitoylated. The serum form is only glycosylated. Post-translationally, proteolytically cleaved on Arg-100 to produce the soluble serum form (sTfR). In terms of processing, palmitoylated on both Cys-62 and Cys-67. Cys-62 seems to be the major site of palmitoylation.

The protein resides in the cell membrane. The protein localises to the melanosome. It localises to the secreted. In terms of biological role, cellular uptake of iron occurs via receptor-mediated endocytosis of ligand-occupied transferrin receptor into specialized endosomes. Endosomal acidification leads to iron release. The apotransferrin-receptor complex is then recycled to the cell surface with a return to neutral pH and the concomitant loss of affinity of apotransferrin for its receptor. Transferrin receptor is necessary for development of erythrocytes and the nervous system. A second ligand, the hereditary hemochromatosis protein HFE, competes for binding with transferrin for an overlapping C-terminal binding site. Positively regulates T and B cell proliferation through iron uptake. Acts as a lipid sensor that regulates mitochondrial fusion by regulating activation of the JNK pathway. When dietary levels of stearate (C18:0) are low, promotes activation of the JNK pathway, resulting in HUWE1-mediated ubiquitination and subsequent degradation of the mitofusin MFN2 and inhibition of mitochondrial fusion. When dietary levels of stearate (C18:0) are high, TFRC stearoylation inhibits activation of the JNK pathway and thus degradation of the mitofusin MFN2. Mediates uptake of NICOL1 into fibroblasts where it may regulate extracellular matrix production. Functionally, (Microbial infection) Acts as a receptor for new-world arenaviruses: Guanarito, Junin and Machupo virus. Its function is as follows. (Microbial infection) Acts as a host entry factor for rabies virus that hijacks the endocytosis of TFRC to enter cells. (Microbial infection) Acts as a host entry factor for SARS-CoV, MERS-CoV and SARS-CoV-2 viruses that hijack the endocytosis of TFRC to enter cells. The polypeptide is Transferrin receptor protein 1 (TFRC) (Homo sapiens (Human)).